Here is a 505-residue protein sequence, read N- to C-terminus: Lysine--tRNA ligase (505 aa).

Positions 415 and 422 each coordinate Mg(2+).

It belongs to the class-II aminoacyl-tRNA synthetase family. Homodimer. Mg(2+) is required as a cofactor.

It is found in the cytoplasm. It catalyses the reaction tRNA(Lys) + L-lysine + ATP = L-lysyl-tRNA(Lys) + AMP + diphosphate. This is Lysine--tRNA ligase from Citrobacter koseri (strain ATCC BAA-895 / CDC 4225-83 / SGSC4696).